Consider the following 275-residue polypeptide: Ribosomal RNA small subunit methyltransferase A (275 aa).

S-adenosyl-L-methionine is bound by residues asparagine 21, leucine 23, glycine 48, glutamate 69, aspartate 94, and asparagine 115.

It belongs to the class I-like SAM-binding methyltransferase superfamily. rRNA adenine N(6)-methyltransferase family. RsmA subfamily.

The protein resides in the cytoplasm. The enzyme catalyses adenosine(1518)/adenosine(1519) in 16S rRNA + 4 S-adenosyl-L-methionine = N(6)-dimethyladenosine(1518)/N(6)-dimethyladenosine(1519) in 16S rRNA + 4 S-adenosyl-L-homocysteine + 4 H(+). Specifically dimethylates two adjacent adenosines (A1518 and A1519) in the loop of a conserved hairpin near the 3'-end of 16S rRNA in the 30S particle. May play a critical role in biogenesis of 30S subunits. The chain is Ribosomal RNA small subunit methyltransferase A from Clostridium botulinum (strain Kyoto / Type A2).